The chain runs to 81 residues: Acyl carrier protein (81 aa).

The Carrier domain occupies 2–80 (ASNEEILAGL…DAVSYIASAQ (79 aa)). Residue Ser-40 is modified to O-(pantetheine 4'-phosphoryl)serine.

The protein belongs to the acyl carrier protein (ACP) family. Post-translationally, 4'-phosphopantetheine is transferred from CoA to a specific serine of apo-ACP by AcpS. This modification is essential for activity because fatty acids are bound in thioester linkage to the sulfhydryl of the prosthetic group.

It localises to the cytoplasm. It functions in the pathway lipid metabolism; fatty acid biosynthesis. In terms of biological role, carrier of the growing fatty acid chain in fatty acid biosynthesis. This is Acyl carrier protein from Renibacterium salmoninarum (strain ATCC 33209 / DSM 20767 / JCM 11484 / NBRC 15589 / NCIMB 2235).